The primary structure comprises 189 residues: Threonylcarbamoyl-AMP synthase (189 aa).

In terms of domain architecture, YrdC-like spans 6 to 189 (SPAFESVLTA…ALTGELYRQG (184 aa)).

The protein belongs to the SUA5 family. TsaC subfamily.

The protein localises to the cytoplasm. The enzyme catalyses L-threonine + hydrogencarbonate + ATP = L-threonylcarbamoyladenylate + diphosphate + H2O. Required for the formation of a threonylcarbamoyl group on adenosine at position 37 (t(6)A37) in tRNAs that read codons beginning with adenine. Catalyzes the conversion of L-threonine, HCO(3)(-)/CO(2) and ATP to give threonylcarbamoyl-AMP (TC-AMP) as the acyladenylate intermediate, with the release of diphosphate. The polypeptide is Threonylcarbamoyl-AMP synthase (Photorhabdus laumondii subsp. laumondii (strain DSM 15139 / CIP 105565 / TT01) (Photorhabdus luminescens subsp. laumondii)).